The chain runs to 134 residues: Transcription antitermination protein NusB (134 aa).

It belongs to the NusB family.

In terms of biological role, involved in transcription antitermination. Required for transcription of ribosomal RNA (rRNA) genes. Binds specifically to the boxA antiterminator sequence of the ribosomal RNA (rrn) operons. In Shewanella oneidensis (strain ATCC 700550 / JCM 31522 / CIP 106686 / LMG 19005 / NCIMB 14063 / MR-1), this protein is Transcription antitermination protein NusB.